The chain runs to 119 residues: MIFGHGIDLQEISAVKKAYDRNPRFAKKVLTPKEWERFESLSGERQMSFLAGRWAGKEAFSKAWGTGIGAVGFKDIEILNNDKGAPVVTQSPFEGNVFISISHSGDFVQASVILEKTKR.

Mg(2+) contacts are provided by aspartate 8 and glutamate 58.

Belongs to the P-Pant transferase superfamily. AcpS family. It depends on Mg(2+) as a cofactor.

Its subcellular location is the cytoplasm. The catalysed reaction is apo-[ACP] + CoA = holo-[ACP] + adenosine 3',5'-bisphosphate + H(+). Its function is as follows. Transfers the 4'-phosphopantetheine moiety from coenzyme A to a Ser of acyl-carrier-protein. This chain is Holo-[acyl-carrier-protein] synthase, found in Streptococcus thermophilus (strain CNRZ 1066).